We begin with the raw amino-acid sequence, 1073 residues long: Pharyngeal muscle protein 2 (1073 aa).

One can recognise an SAP domain in the interval 9 to 43; that stretch reads INDLRVSELKTELEKRGLSTQGVKVVLTVRLNKAL. Disordered regions lie at residues 59–186, 207–305, and 337–388; these read VSPM…PEVV, ELKE…SMET, and LLED…KSML. The span at 91-111 shows a compositional bias: acidic residues; it reads EGNDENVLVEEKEEEEEEEDS. The span at 112-127 shows a compositional bias: basic and acidic residues; sequence HDLQIIEDHELEVPSD. Residues 128-151 are compositionally biased toward acidic residues; that stretch reads EKDDTLVEDEEFEEAEQVEPEPEA. Composition is skewed to basic and acidic residues over residues 156–182 and 207–217; these read VEEKPEEKLEEKPEEKLEEKPEEKPVE and ELKEKPEKEPE. 2 stretches are compositionally biased toward acidic residues: residues 223–232 and 248–265; these read EPVEQLENEP and QDGEDEFEEDDSSSDIEI. Basic and acidic residues predominate over residues 277-293; it reads AEEKVEKKEKKPEEIPH. Residues 366-386 show a composition bias toward low complexity; it reads ASTPQATPSKAASSSAGSGKS. Residues 396–478 form the RRM domain; that stretch reads TSIWIRGMTP…RVLRVEKVSE (83 aa). Disordered stretches follow at residues 481-759, 845-917, and 1015-1073; these read LTSS…ERRR, QEHR…RNLV, and SQNA…RGNY. Composition is skewed to low complexity over residues 496-505 and 513-524; these read EAASTMSTSP and PVVTTTTTTSAA. A compositionally biased stretch (basic and acidic residues) spans 573–587; it reads ITFDREEESNRDSRR. The span at 588–622 shows a compositional bias: low complexity; that stretch reads TIAAAPPARTSRMARSPLRAPLRAARGSESSRSST. The span at 674–689 shows a compositional bias: polar residues; sequence VTVQQDAPRASYQTEQ. 2 stretches are compositionally biased toward basic and acidic residues: residues 707–727 and 742–759; these read VSPDRSEQRRHRDEPPPRRAP and PPRRQEGARRSEEPERRR. Composition is skewed to low complexity over residues 901–917, 1015–1026, and 1034–1060; these read SSSNSNRNSNSGGRNLV, SQNAATPSTSTS, and QWQQQSYGSNQHQHHQNNNSSQPSSSN.

As to expression, expressed in most tissues including the hypodermal, muscle, neuronal, vulval and intestinal tissues. Isoform a: Expressed in the pharynx, nerve ring, intestine, neurons and ventral nerve cord.

The protein localises to the nucleus. Functionally, involved in pharyngeal muscle development and ensures pharyngeal grinder function during feeding. Plays a role in the defense against the accumulation of ingested live pathogenic bacteria in the intestine. Has a role in the determination of life span. The polypeptide is Pharyngeal muscle protein 2 (Caenorhabditis elegans).